The primary structure comprises 1388 residues: Kinesin-like protein KIF15 (1388 aa).

Residues 1–25 (MAPGCKTELRSVTNGQSNQPSNEGD) form a disordered region. Residues 10–22 (RSVTNGQSNQPSN) are compositionally biased toward polar residues. One can recognise a Kinesin motor domain in the interval 26–363 (AIKVFVRIRP…LNFAQRAKLI (338 aa)). 109–116 (GQTGSGKT) contacts ATP. Residues 368 to 1388 (VVNEDTQGNV…FLKEKKRSES (1021 aa)) adopt a coiled-coil conformation. Thr-399 carries the phosphothreonine modification. Ser-568 is subject to Phosphoserine. Lys-1009 carries the N6-acetyllysine modification. Phosphoserine is present on residues Ser-1141 and Ser-1169. The interval 1228 to 1250 (QKENSDQNHPDNQQLKNEQEESI) is disordered.

This sequence belongs to the TRAFAC class myosin-kinesin ATPase superfamily. Kinesin family. KLP2 subfamily. Interacts with MKI67 and TPX2. Expressed in testis, colon, thymus and in breast cancer.

It is found in the cytoplasm. The protein localises to the cytoskeleton. It localises to the spindle. Its function is as follows. Plus-end directed kinesin-like motor enzyme involved in mitotic spindle assembly. The polypeptide is Kinesin-like protein KIF15 (KIF15) (Homo sapiens (Human)).